A 282-amino-acid chain; its full sequence is UPF0759 protein YunF (282 aa).

Belongs to the UPF0759 family.

The polypeptide is UPF0759 protein YunF (yunF) (Bacillus subtilis (strain 168)).